Reading from the N-terminus, the 96-residue chain is Integration host factor subunit beta (96 aa).

The protein belongs to the bacterial histone-like protein family. Heterodimer of an alpha and a beta chain.

In terms of biological role, this protein is one of the two subunits of integration host factor, a specific DNA-binding protein that functions in genetic recombination as well as in transcriptional and translational control. The protein is Integration host factor subunit beta of Caulobacter vibrioides (strain ATCC 19089 / CIP 103742 / CB 15) (Caulobacter crescentus).